The chain runs to 270 residues: 3-phenylpropionate-dihydrodiol/cinnamic acid-dihydrodiol dehydrogenase (270 aa).

10–34 is an NAD(+) binding site; it reads FITGGGSGLGLALVERFIEEGAQVA. Ser143 serves as a coordination point for substrate. Catalysis depends on Tyr156, which acts as the Proton acceptor.

This sequence belongs to the short-chain dehydrogenases/reductases (SDR) family.

The enzyme catalyses 3-(cis-5,6-dihydroxycyclohexa-1,3-dien-1-yl)propanoate + NAD(+) = 3-(2,3-dihydroxyphenyl)propanoate + NADH + H(+). It carries out the reaction (2E)-3-(cis-5,6-dihydroxycyclohexa-1,3-dien-1-yl)prop-2-enoate + NAD(+) = (2E)-3-(2,3-dihydroxyphenyl)prop-2-enoate + NADH + H(+). It participates in aromatic compound metabolism; 3-phenylpropanoate degradation. Functionally, converts 3-phenylpropionate-dihydrodiol (PP-dihydrodiol) and cinnamic acid-dihydrodiol (CI-dihydrodiol) into 3-(2,3-dihydroxylphenyl)propanoic acid (DHPP) and 2,3-dihydroxicinnamic acid (DHCI), respectively. This is 3-phenylpropionate-dihydrodiol/cinnamic acid-dihydrodiol dehydrogenase from Escherichia coli (strain SMS-3-5 / SECEC).